We begin with the raw amino-acid sequence, 368 residues long: 3-isopropylmalate dehydrogenase (368 aa).

80-93 is a binding site for NAD(+); it reads GPKWDNLEFSKKPE. Residues Arg-100, Arg-110, Arg-138, and Asp-229 each contribute to the substrate site. Mg(2+) contacts are provided by Asp-229, Asp-253, and Asp-257. 292-304 is an NAD(+) binding site; sequence GSAPDIAGKEIAN.

Belongs to the isocitrate and isopropylmalate dehydrogenases family. LeuB type 1 subfamily. In terms of assembly, homodimer. Mg(2+) serves as cofactor. The cofactor is Mn(2+).

Its subcellular location is the cytoplasm. The enzyme catalyses (2R,3S)-3-isopropylmalate + NAD(+) = 4-methyl-2-oxopentanoate + CO2 + NADH. Its pathway is amino-acid biosynthesis; L-leucine biosynthesis; L-leucine from 3-methyl-2-oxobutanoate: step 3/4. Functionally, catalyzes the oxidation of 3-carboxy-2-hydroxy-4-methylpentanoate (3-isopropylmalate) to 3-carboxy-4-methyl-2-oxopentanoate. The product decarboxylates to 4-methyl-2 oxopentanoate. This chain is 3-isopropylmalate dehydrogenase, found in Pelagibacter ubique (strain HTCC1062).